We begin with the raw amino-acid sequence, 612 residues long: Poly(A) RNA polymerase, mitochondrial (612 aa).

The N-terminal 57 residues, 1-57 (MNSLVRRSAQQLSLWRTYCIKHNASEAASPGRNAGRPNYEEFIGRHQRQAQCSIVVQ), are a transit peptide targeting the mitochondrion. ATP-binding positions include 83 to 89 (YCVRQDE) and 228 to 229 (GC). Aspartate 230 and aspartate 232 together coordinate Mg(2+). Residues 427–463 (SLSELLLQFFEFYSQFDFHNRAISLNEGKPLSKPDHS) enclose the PAP-associated domain. Disordered regions lie at residues 555-574 (AGATSSSTPPTPAITYKSAS) and 588-612 (SELKQLRGSGSSVPTSSPNNRRRSR).

Belongs to the DNA polymerase type-B-like family. Mg(2+) serves as cofactor. Requires Mn(2+) as cofactor.

It is found in the mitochondrion. It catalyses the reaction RNA(n) + ATP = RNA(n)-3'-adenine ribonucleotide + diphosphate. Functionally, polymerase that creates the 3' poly(A) tail of mitochondrial transcripts. This is not required for transcript stability or translation but may maintain mRNA integrity by protecting 3' termini from degradation. The protein is Poly(A) RNA polymerase, mitochondrial of Drosophila melanogaster (Fruit fly).